A 664-amino-acid chain; its full sequence is MSLQRTVRVSLEHPTSAVCVAGVETIVDIYGSVPEGTDMFEVYGTPGVDIYVSPSMERNRERADTRRWCFNKGLEIIVVMNSPSNDLNDSHVQIAYHSSHEHLPLAYAVLYLTCVDITLDCDMNCADRQDRSFVDKRQWMWGPDGYGAILLVNCDRDEVSSDAQDNCDQCVRCLQDLEDMSVMVLRTQGPESLFDDHRLILHTSSCDAERARVFHVCGPEDSCEAYRCVLGPDRMSYEVPRLKGYEERFYVEGLSFPDAGFPGILSFHITLLDDSNEDYSETPIFTDTVVFRVAPWIMTPSTLPPLEVYVCQVRNNTCFVEAVEELARKAGCKLTICPQAENRNDRWIQDEMELGYTQAPHKTLPVVFDSPRNGELQGFPYKRILGLDFGYVTREPPDSSVSGLDSFGNLEVSPPVVANGKEYPLGRILIGGNLPGSRGRRVTQVVRDFLHAQKVQPLVELFVDWLAVGHVDEFLSFVPAPDGKGFRLLLASPGACFRLFQEKQKWGHGRSLLFEGVIGDRRVQTISINQVLSNQSLINFNKFAQSCIDWNREVLKRELGLGESDIIDIPQLFKSEKRKAVAFFPDLVNMLVLGKHLGIPKPFGPIINGRCCLEEKVRSLLEPLGLHCTFIDDFTPYHMLHGEVHCGTNVRREPFAFKWWHMVP.

It belongs to the protein arginine deiminase family. Ca(2+) is required as a cofactor. In terms of tissue distribution, epidermis and hair follicles.

The protein resides in the cytoplasm. It carries out the reaction L-arginyl-[protein] + H2O = L-citrullyl-[protein] + NH4(+). Its function is as follows. Catalyzes the deimination of arginine residues of proteins. The protein is Protein-arginine deiminase type-3 (Padi3) of Rattus norvegicus (Rat).